Reading from the N-terminus, the 81-residue chain is Short neurotoxin 2 (81 aa).

The first 21 residues, 1 to 21 (MKTLLLTLVVVTIVCLDLGYT), serve as a signal peptide directing secretion. Cystine bridges form between Cys24–Cys43, Cys38–Cys60, Cys62–Cys73, and Cys74–Cys79.

Belongs to the three-finger toxin family. Short-chain subfamily. Type I alpha-neurotoxin sub-subfamily. In terms of tissue distribution, expressed by the venom gland.

It is found in the secreted. Its function is as follows. Binds to muscle nicotinic acetylcholine receptor (nAChR) and inhibit acetylcholine from binding to the receptor, thereby impairing neuromuscular transmission. This is Short neurotoxin 2 from Hydrophis hardwickii (Hardwick's spine-bellied seasnake).